Consider the following 391-residue polypeptide: Matrix metalloproteinase-23 (391 aa).

Over 1–19 (MGWRACLRPEASGAVQGRW) the chain is Cytoplasmic. Positions 1-79 (MGWRACLRPE…LSMLVTRRRR (79 aa)) are excised as a propeptide. Residues 20–38 (LGAVLSGLCLLSALAFLEW) traverse the membrane as a helical; Signal-anchor for type II membrane protein segment. Residues 39–391 (LGSPTETAWN…TYSWRVRVRS (353 aa)) lie on the Lumenal side of the membrane. N-linked (GlcNAc...) asparagine glycosylation is found at asparagine 93 and asparagine 149. Histidine 212 contacts Zn(2+). Glutamate 213 is an active-site residue. Residues histidine 216 and histidine 222 each contribute to the Zn(2+) site. An N-linked (GlcNAc...) asparagine glycan is attached at asparagine 233. The 35-residue stretch at 256 to 290 (CLDRIFVCTSWARKGFCDVRQRLMKRLCPRSCDFC) folds into the ShKT domain. 3 disulfide bridges follow: cysteine 256–cysteine 290, cysteine 263–cysteine 283, and cysteine 272–cysteine 287. The region spanning 296–381 (PTVATTTSPT…VVRHRQRVLT (86 aa)) is the Ig-like C2-type domain. Asparagine 317 carries an N-linked (GlcNAc...) asparagine glycan. An intrachain disulfide couples cysteine 322 to cysteine 371.

This sequence belongs to the peptidase M10A family. Zn(2+) serves as cofactor. Post-translationally, N-glycosylated. Proteolytic cleavage might yield an active form. As to expression, expressed at the highest levels in ovary and uterus. In ovary expression is strictly confined to granulosa cells of preantral and small antral follicles. Detected also in testis and prostate.

It is found in the membrane. The protein resides in the endoplasmic reticulum membrane. Inhibited by TIMP2. Functionally, protease. May regulate the surface expression of some potassium channels by retaining them in the endoplasmic reticulum. The chain is Matrix metalloproteinase-23 (Mmp23) from Rattus norvegicus (Rat).